Consider the following 280-residue polypeptide: Mevalonyl-coenzyme A hydratase SIDH (280 aa).

Residues 278 to 280 (SKL) carry the PTS1-type peroxisomal targeting signal motif.

This sequence belongs to the enoyl-CoA hydratase/isomerase family.

Its subcellular location is the peroxisome. The protein operates within siderophore biosynthesis. Mevalonyl-coenzyme A hydratase; part of the gene cluster that mediates the biosynthesis of at least 11 siderophores, including beauverichelin A, dimerumic acid (DA), Na-dimethyl coprogen (NADC), eleutherazine B, ferricrocin (FC), fusarinine A, fusarinine C (FsC), metachelin A, mevalonolactone, rhodotorulic acid (RA) and tenellin. This cocktail of siderophores for iron metabolism is essential for virulence, and more specifically for the fungal virulence in penetrating through the host cuticle. Siderophore synthesis is also involved in conidial germination under iron-deficient conditions. For biosynthesis of fusarinine C, the transacylase SIDF transfers anhydromevalonyl to N(5)-hydroxyornithine. The required anhydromevalonyl-CoA moiety is derived from mevalonate by CoA ligation and dehydration catalyzed by SIDI and sidH respectively. SIDH is not essential for siderophore production, probably due to functional redundancy of this protein family, as there are 15 homologs of SIDH in B.bassiana. In Beauveria bassiana (strain ARSEF 2860) (White muscardine disease fungus), this protein is Mevalonyl-coenzyme A hydratase SIDH.